The following is a 219-amino-acid chain: uncharacterized protein (219 aa).

Asp-58 is an active-site residue.

Belongs to the pseudouridine synthase RluA family.

It catalyses the reaction a uridine in RNA = a pseudouridine in RNA. This is an uncharacterized protein from Zymomonas mobilis subsp. mobilis (strain ATCC 31821 / ZM4 / CP4).